A 443-amino-acid polypeptide reads, in one-letter code: Aklavinone 7-beta-L-rhodosaminyltransferase (443 aa).

Positions 1–23 (MRVLLTSFALDAHFNGSVPLAWA) are cleaved as a signal peptide.

It belongs to the glycosyltransferase 28 family.

The enzyme catalyses dTDP-beta-L-rhodosamine + aklavinone = aclacinomycin T + dTDP + 2 H(+). The activity of AknS is substantially increased by the addition of the accessory protein AknT. In terms of biological role, involved in the biosynthesis of the anthracycline antitumor agent aclacinomycin A. Catalyzes the transfer of the proximal deoxyhexose, L-rhodosamine, from dTDP-beta-L-rhodosamine to the C7-OH of aklavinone aglycone to yield aclacinomycin T (rhodosaminyl-aklavinone). It can also use dTDP-2-deoxy-beta-L-fucose, TDP-2-deoxyfucose, dTDP-4-amino-2-deoxyrhamnose, TDP-L-rhodosamine as sugar donor and epsilon-rhodomycinone as sugar acceptor. In Streptomyces galilaeus, this protein is Aklavinone 7-beta-L-rhodosaminyltransferase.